A 513-amino-acid chain; its full sequence is ATP synthase subunit alpha 2 (513 aa).

169–176 (GDRQTGKT) lines the ATP pocket.

The protein belongs to the ATPase alpha/beta chains family. In terms of assembly, F-type ATPases have 2 components, CF(1) - the catalytic core - and CF(0) - the membrane proton channel. CF(1) has five subunits: alpha(3), beta(3), gamma(1), delta(1), epsilon(1). CF(0) has three main subunits: a(1), b(2) and c(9-12). The alpha and beta chains form an alternating ring which encloses part of the gamma chain. CF(1) is attached to CF(0) by a central stalk formed by the gamma and epsilon chains, while a peripheral stalk is formed by the delta and b chains.

The protein resides in the cell inner membrane. It carries out the reaction ATP + H2O + 4 H(+)(in) = ADP + phosphate + 5 H(+)(out). Functionally, produces ATP from ADP in the presence of a proton gradient across the membrane. The alpha chain is a regulatory subunit. This chain is ATP synthase subunit alpha 2, found in Pseudoalteromonas atlantica (strain T6c / ATCC BAA-1087).